Consider the following 181-residue polypeptide: Alkyl hydroperoxide reductase AhpD (181 aa).

The active-site Proton donor is the Cys131. A disulfide bond links Cys131 and Cys134. Cys134 serves as the catalytic Cysteine sulfenic acid (-SOH) intermediate.

The protein belongs to the AhpD family.

The catalysed reaction is N(6)-[(R)-dihydrolipoyl]-L-lysyl-[lipoyl-carrier protein] + a hydroperoxide = N(6)-[(R)-lipoyl]-L-lysyl-[lipoyl-carrier protein] + an alcohol + H2O. Antioxidant protein with alkyl hydroperoxidase activity. Required for the reduction of the AhpC active site cysteine residues and for the regeneration of the AhpC enzyme activity. The sequence is that of Alkyl hydroperoxide reductase AhpD from Bradyrhizobium sp. (strain BTAi1 / ATCC BAA-1182).